Consider the following 870-residue polypeptide: Leucine--tRNA ligase (870 aa).

The short motif at Pro-55–His-65 is the 'HIGH' region element. Residues Lys-626–Ser-630 carry the 'KMSKS' region motif. Lys-629 serves as a coordination point for ATP.

Belongs to the class-I aminoacyl-tRNA synthetase family.

It is found in the cytoplasm. The catalysed reaction is tRNA(Leu) + L-leucine + ATP = L-leucyl-tRNA(Leu) + AMP + diphosphate. In Prochlorococcus marinus (strain SARG / CCMP1375 / SS120), this protein is Leucine--tRNA ligase.